Reading from the N-terminus, the 393-residue chain is MAAVTVEEIRKAQRADGPAAVLAIGTATPANYVTQADYPDYYFRITKSEHMTELKEKFKRMCDKSMIRKRYMYLTEDILKENPNMCAYMAPSLDARQDIVVVEVPKLGKEAAVKAIKEWGQPKSKITHLIFCTTSGVDMPGCDYQLTKLLGLRPSVKRFMMYQQGCFAGGTVLRLAKDLAENNRGARVLVVCSEITAVTFRGPADTHLDSLVGQALFGDGAAAVIVGADPNESIERPLYQLVSAAQTILPDSDGAIDGHLREVGLTFHLLKDVPGLISKNIEKSLKEAFGPIGISDWNSIFWIAHPGGPAILDQVEAKLGLKEEKLRATRQVLSEYGNMSSACVLFILDEMRKKCAEEGRATTGEGLDWGVLFGFGPGLTVETVVLRSVPINA.

Cysteine 166 is a catalytic residue.

It belongs to the thiolase-like superfamily. Chalcone/stilbene synthases family.

It carries out the reaction (E)-4-coumaroyl-CoA + 3 malonyl-CoA + 3 H(+) = 2',4,4',6'-tetrahydroxychalcone + 3 CO2 + 4 CoA. Its pathway is secondary metabolite biosynthesis; flavonoid biosynthesis. Its function is as follows. The primary product of this enzyme is 4,2',4',6'-tetrahydroxychalcone (also termed naringenin-chalcone or chalcone) which can under specific conditions spontaneously isomerize into naringenin. This is Chalcone synthase 2 (CHS2) from Ruta graveolens (Common rue).